The following is a 21-amino-acid chain: Large ribosomal subunit protein uL10 (21 aa).

It belongs to the universal ribosomal protein uL10 family. In terms of assembly, part of the ribosomal stalk of the 50S ribosomal subunit. The N-terminus interacts with L11 and the large rRNA to form the base of the stalk. The C-terminus forms an elongated spine to which L12 dimers bind in a sequential fashion forming a multimeric L10(L12)X complex.

Functionally, forms part of the ribosomal stalk, playing a central role in the interaction of the ribosome with GTP-bound translation factors. The protein is Large ribosomal subunit protein uL10 (rplJ) of Bacillus cereus.